A 351-amino-acid polypeptide reads, in one-letter code: Nuclear inhibitor of protein phosphatase 1 (351 aa).

The segment at 1-142 is interaction with CDC5L, SF3B1 and MELK; that stretch reads MAAAVNSGSS…LPSAVKGDEK (142 aa). Positions 49–101 constitute an FHA domain; the sequence is YLFGRNPDLCDFTIDHQSCSRVHAALVYHKHLKRVFLIDLNSTHGTFLGHIRL. An interaction with EED region spans residues 143-224; the sequence is MGGEDDELKG…VDPSVGRFRN (82 aa). Position 161 is a phosphothreonine (Thr-161). Residues Ser-178 and Ser-199 each carry the phosphoserine modification. 2 consecutive short sequence motifs (nuclear localization signal) follow at residues 185–209 and 210–240; these read GNLD…DDEI and INPE…RMEG. The tract at residues 191–200 is involved in PP-1 inhibition; it reads RPKRKRKNSR. The interval 200–203 is involved in PP-1 binding; sequence RVTF. Position 204 is a phosphoserine (Ser-204). At Ser-249 the chain carries Phosphoserine. A Phosphotyrosine modification is found at Tyr-264. Positions 310-329 are interaction with EED; the sequence is AVAINPTPNPAVYNPEAVNE. The tract at residues 314-351 is disordered; that stretch reads NPTPNPAVYNPEAVNEPKKKKYAKEAWPGKKPTPSLLI. Positions 330–351 are RNA-binding; it reads PKKKKYAKEAWPGKKPTPSLLI. The interval 331-337 is involved in PP-1 inhibition; the sequence is KKKKYAK. Position 335 is a phosphotyrosine (Tyr-335).

In terms of assembly, interacts with phosphorylated CDC5L, SF3B1 and MELK. Part of the spliceosome. Interacts with PPP1CA, PPP1CB and PPP1CC. Interacts with EED. Part of a complex consisting of PPP1R8, EED, HDAC2 and PP-1. Post-translationally, may be inactivated by phosphorylation on Ser-199 or Ser-204.

It localises to the nucleus. The protein resides in the nucleus speckle. Inhibitor subunit of the major nuclear protein phosphatase-1 (PP-1). It has RNA-binding activity but does not cleave RNA and may target PP-1 to RNA-associated substrates. May also be involved in pre-mRNA splicing. Binds DNA and might act as a transcriptional repressor. Essential for cell proliferation and early embryonic development. This Mus musculus (Mouse) protein is Nuclear inhibitor of protein phosphatase 1 (Ppp1r8).